The following is a 405-amino-acid chain: Imidazolonepropionase (405 aa).

Residues His-73 and His-75 each contribute to the Fe(3+) site. Zn(2+) is bound by residues His-73 and His-75. 4-imidazolone-5-propanoate is bound by residues Arg-82, Tyr-145, and His-178. Residue Tyr-145 coordinates N-formimidoyl-L-glutamate. Residue His-243 participates in Fe(3+) binding. His-243 lines the Zn(2+) pocket. 4-imidazolone-5-propanoate is bound at residue Gln-246. Asp-318 is a binding site for Fe(3+). Residue Asp-318 participates in Zn(2+) binding. N-formimidoyl-L-glutamate contacts are provided by Asn-320 and Gly-322. Thr-323 contacts 4-imidazolone-5-propanoate.

This sequence belongs to the metallo-dependent hydrolases superfamily. HutI family. Zn(2+) is required as a cofactor. Fe(3+) serves as cofactor.

The protein localises to the cytoplasm. It carries out the reaction 4-imidazolone-5-propanoate + H2O = N-formimidoyl-L-glutamate. The protein operates within amino-acid degradation; L-histidine degradation into L-glutamate; N-formimidoyl-L-glutamate from L-histidine: step 3/3. Functionally, catalyzes the hydrolytic cleavage of the carbon-nitrogen bond in imidazolone-5-propanoate to yield N-formimidoyl-L-glutamate. It is the third step in the universal histidine degradation pathway. The polypeptide is Imidazolonepropionase (Brucella suis biovar 1 (strain 1330)).